The chain runs to 270 residues: Multi-heme protein MamP (270 aa).

The Cytoplasmic portion of the chain corresponds to methionine 1–valine 6. Over leucine 7–isoleucine 20 the chain traverses the membrane. At glycine 21 to asparagine 270 the chain is on the lumenal side. The interval asparagine 84–glycine 201 is PDZ. The short motif at isoleucine 205–valine 225 is the MCR (magnetochrome) 1 element. The heme site is built by cysteine 219, cysteine 222, histidine 223, cysteine 263, cysteine 266, and histidine 267. Positions isoleucine 245 to isoleucine 269 match the MCR 2 motif.

Belongs to the magnetosome MamP family. Homodimer. Heme is required as a cofactor. Subject to proteolytic cleavage which requires both MamE and MamO.

The protein localises to the cell inner membrane. Its function is as follows. Involved in redox-control of magnetite formation. Oxidizes Fe(2+) at alkaline pH; successively forms ferrihydrite (Fe(3+)(2)O(3) 0.5 H(2)O) then magnetite (Fe(3)O(4)) from an Fe(2+) solution. The chain is Multi-heme protein MamP from Magnetospirillum gryphiswaldense (strain DSM 6361 / JCM 21280 / NBRC 15271 / MSR-1).